The primary structure comprises 379 residues: MRVLAAMSGGVDSAVAAARAVEAGHDVVGVHLALSRMPGTLRTGSRGCCTIEDSRDAWRACDVLGIPYYVWDFSERFKEDVVQDFIDEYAAGRTPNPCMRCNERIKFAALLEKAIALGFDAVCTGHYAKVITDADGNPELHRAADWAKDQSYVLGVLTHEQLKHSMFPLADTPSKAEVRAEAERRGLSVANKPDSHDICFIPDGDTAGWLAEKIEMTTGDIVDEAGTKVGEHPGANAFTVGQRRGLKLGTPAADGKPRFVLEIRPKENKVVVGPEALLAIDEIRGIKVSWAGLPIAEVATGDEFDCHAQVRAHGDPVPATARMERLTDDDGAERTNLVVTLATPLRGVAPGQTVVLYQGSRVLGQATIDTARSLQRAAL.

Residues 6-13 (AMSGGVDS) and L32 contribute to the ATP site. The Nucleophile role is filled by C101. The cysteines at positions 101 and 199 are disulfide-linked. G125 is a binding site for ATP. Residues 148–150 (KDQ) form an interaction with tRNA region. The active-site Cysteine persulfide intermediate is the C199.

This sequence belongs to the MnmA/TRMU family.

The protein localises to the cytoplasm. It catalyses the reaction S-sulfanyl-L-cysteinyl-[protein] + uridine(34) in tRNA + AH2 + ATP = 2-thiouridine(34) in tRNA + L-cysteinyl-[protein] + A + AMP + diphosphate + H(+). Catalyzes the 2-thiolation of uridine at the wobble position (U34) of tRNA, leading to the formation of s(2)U34. In Arthrobacter sp. (strain FB24), this protein is tRNA-specific 2-thiouridylase MnmA.